The sequence spans 189 residues: Xanthine phosphoribosyltransferase (189 aa).

Xanthine-binding residues include Leu-20 and Asn-27. 128–132 (ANGKA) serves as a coordination point for 5-phospho-alpha-D-ribose 1-diphosphate. Residue Lys-156 participates in xanthine binding.

The protein belongs to the purine/pyrimidine phosphoribosyltransferase family. Xpt subfamily. In terms of assembly, homodimer.

The protein resides in the cytoplasm. It carries out the reaction XMP + diphosphate = xanthine + 5-phospho-alpha-D-ribose 1-diphosphate. It functions in the pathway purine metabolism; XMP biosynthesis via salvage pathway; XMP from xanthine: step 1/1. In terms of biological role, converts the preformed base xanthine, a product of nucleic acid breakdown, to xanthosine 5'-monophosphate (XMP), so it can be reused for RNA or DNA synthesis. The protein is Xanthine phosphoribosyltransferase of Pseudomonas syringae pv. syringae (strain B728a).